The primary structure comprises 514 residues: 2-isopropylmalate synthase (514 aa).

The region spanning 5-268 (LIIFDTTLRD…DVGIDTTQIV (264 aa)) is the Pyruvate carboxyltransferase domain. Positions 14, 202, 204, and 239 each coordinate Mn(2+). Positions 395 to 514 (KFVSLSQHSE…KDDKLNPQRS (120 aa)) are regulatory domain.

This sequence belongs to the alpha-IPM synthase/homocitrate synthase family. LeuA type 1 subfamily. As to quaternary structure, homodimer. Requires Mn(2+) as cofactor.

The protein resides in the cytoplasm. It carries out the reaction 3-methyl-2-oxobutanoate + acetyl-CoA + H2O = (2S)-2-isopropylmalate + CoA + H(+). Its pathway is amino-acid biosynthesis; L-leucine biosynthesis; L-leucine from 3-methyl-2-oxobutanoate: step 1/4. Catalyzes the condensation of the acetyl group of acetyl-CoA with 3-methyl-2-oxobutanoate (2-ketoisovalerate) to form 3-carboxy-3-hydroxy-4-methylpentanoate (2-isopropylmalate). The chain is 2-isopropylmalate synthase from Burkholderia multivorans (strain ATCC 17616 / 249).